We begin with the raw amino-acid sequence, 208 residues long: Thioredoxin domain-containing protein 9 (208 aa).

Positions 68–179 (YEEVADEKEF…MENRLARSEV (112 aa)) constitute a Thioredoxin domain.

Expressed throughout the body with high expression in the nervous system, including the ventral nerve cord and tail neurons, and vulva.

Its subcellular location is the nucleus. It localises to the cytoplasm. Its function is as follows. Required for normal microtubule organization and function. Regulates tubulin acetylation in ALM and PLM neurons. The chain is Thioredoxin domain-containing protein 9 from Caenorhabditis elegans.